The sequence spans 400 residues: Unsaturated glucuronyl hydrolase (400 aa).

An N-terminal signal peptide occupies residues 1–20; it reads MRKLVYLVLVLGLTFLNVRC. The active-site Nucleophile is the Asp-120. The Proton donor role is filled by Asp-181.

Belongs to the glycosyl hydrolase 88 family.

The protein resides in the cell surface. Unsaturated glucuronyl hydrolase involved in ulvan degradation. Ulvan is the main polysaccharide component of the Ulvales (green seaweed) cell wall. It is composed of disaccharide building blocks comprising 3-sulfated rhamnose (Rha3S) linked to D-glucuronic acid (GlcA), L-iduronic acid (IduA), or D-xylose (Xyl). Unsaturated glucuronyl hydrolase catalyzes the cleavage of the unsaturated 4-deoxy-L-threo-hex-4-enopyranosiduronic acid (deltaUA) at the non-reducing end of ulvan oligomers, thus forming 5-dehydro-4-deoxy-D-glucuronate. The chain is Unsaturated glucuronyl hydrolase from Formosa agariphila (strain DSM 15362 / KCTC 12365 / LMG 23005 / KMM 3901 / M-2Alg 35-1).